Reading from the N-terminus, the 676-residue chain is UvrABC system protein C (676 aa).

The region spanning Val-16–Ile-95 is the GIY-YIG domain. The UVR domain occupies Asp-208–Ala-243.

Belongs to the UvrC family. Interacts with UvrB in an incision complex.

The protein resides in the cytoplasm. In terms of biological role, the UvrABC repair system catalyzes the recognition and processing of DNA lesions. UvrC both incises the 5' and 3' sides of the lesion. The N-terminal half is responsible for the 3' incision and the C-terminal half is responsible for the 5' incision. The sequence is that of UvrABC system protein C from Mycobacterium sp. (strain KMS).